Here is a 320-residue protein sequence, read N- to C-terminus: Biotin synthase (320 aa).

In terms of domain architecture, Radical SAM core spans Asn39 to Arg267. Residues Cys54, Cys58, and Cys61 each coordinate [4Fe-4S] cluster. [2Fe-2S] cluster-binding residues include Cys98, Cys130, Cys190, and Arg262.

The protein belongs to the radical SAM superfamily. Biotin synthase family. As to quaternary structure, homodimer. [4Fe-4S] cluster is required as a cofactor. The cofactor is [2Fe-2S] cluster.

The catalysed reaction is (4R,5S)-dethiobiotin + (sulfur carrier)-SH + 2 reduced [2Fe-2S]-[ferredoxin] + 2 S-adenosyl-L-methionine = (sulfur carrier)-H + biotin + 2 5'-deoxyadenosine + 2 L-methionine + 2 oxidized [2Fe-2S]-[ferredoxin]. The protein operates within cofactor biosynthesis; biotin biosynthesis; biotin from 7,8-diaminononanoate: step 2/2. Functionally, catalyzes the conversion of dethiobiotin (DTB) to biotin by the insertion of a sulfur atom into dethiobiotin via a radical-based mechanism. The sequence is that of Biotin synthase from Synechococcus elongatus (strain ATCC 33912 / PCC 7942 / FACHB-805) (Anacystis nidulans R2).